A 115-amino-acid chain; its full sequence is Nucleoid-associated protein tlr0723 (115 aa).

This sequence belongs to the YbaB/EbfC family. As to quaternary structure, homodimer.

It localises to the cytoplasm. It is found in the nucleoid. Functionally, binds to DNA and alters its conformation. May be involved in regulation of gene expression, nucleoid organization and DNA protection. In Thermosynechococcus vestitus (strain NIES-2133 / IAM M-273 / BP-1), this protein is Nucleoid-associated protein tlr0723.